The chain runs to 532 residues: O-phosphoserine--tRNA(Cys) ligase (532 aa).

Residues 186–188 (HMT), 231–233 (SAS), 273–274 (YY), and asparagine 317 contribute to the substrate site.

This sequence belongs to the class-II aminoacyl-tRNA synthetase family. O-phosphoseryl-tRNA(Cys) synthetase subfamily. Homotetramer. Interacts with SepCysS.

It carries out the reaction tRNA(Cys) + O-phospho-L-serine + ATP = O-phospho-L-seryl-tRNA(Cys) + AMP + diphosphate. Functionally, catalyzes the attachment of O-phosphoserine (Sep) to tRNA(Cys). This is O-phosphoserine--tRNA(Cys) ligase from Methanothermobacter thermautotrophicus (strain ATCC 29096 / DSM 1053 / JCM 10044 / NBRC 100330 / Delta H) (Methanobacterium thermoautotrophicum).